The primary structure comprises 290 residues: N-acetylmannosamine kinase (290 aa).

Residues 5-12 (AIDIGGTK) and 132-139 (GVGGGVVS) each bind ATP. Zn(2+) contacts are provided by H156, C166, C168, and C173.

Belongs to the ROK (NagC/XylR) family. NanK subfamily. Homodimer.

It carries out the reaction an N-acyl-D-mannosamine + ATP = an N-acyl-D-mannosamine 6-phosphate + ADP + H(+). It functions in the pathway amino-sugar metabolism; N-acetylneuraminate degradation; D-fructose 6-phosphate from N-acetylneuraminate: step 2/5. Functionally, catalyzes the phosphorylation of N-acetylmannosamine (ManNAc) to ManNAc-6-P. The chain is N-acetylmannosamine kinase from Citrobacter koseri (strain ATCC BAA-895 / CDC 4225-83 / SGSC4696).